The chain runs to 189 residues: Der GTPase-activating protein YihI (189 aa).

Residues 1-81 (MARKKKTRRV…ALAKKDPRLG (81 aa)) are disordered. Composition is skewed to basic and acidic residues over residues 9–27 (RVSD…ELPK) and 35–46 (TRYELDAKARED). Positions 60–71 (RHSATENNNNHQ) are enriched in polar residues.

It belongs to the YihI family. Interacts with Der.

In terms of biological role, a GTPase-activating protein (GAP) that modifies Der/EngA GTPase function. May play a role in ribosome biogenesis. In Pasteurella multocida (strain Pm70), this protein is Der GTPase-activating protein YihI.